A 541-amino-acid chain; its full sequence is Glutamine-dependent NAD(+) synthetase (541 aa).

The region spanning 4-243 (FKIALAQFSP…EELYYSEFDI (240 aa)) is the CN hydrolase domain. Catalysis depends on Glu44, which acts as the Proton acceptor; for glutaminase activity. Lys111 serves as the catalytic For glutaminase activity. Tyr117 provides a ligand contact to L-glutamine. Residue Cys147 is the Nucleophile; for glutaminase activity of the active site. 2 residues coordinate L-glutamine: Ser173 and Lys179. 286–293 (GLSGGIDS) is an ATP binding site. Residue Asn369 coordinates deamido-NAD(+). Thr393 provides a ligand contact to ATP. 2 residues coordinate deamido-NAD(+): Glu398 and Lys510.

In the C-terminal section; belongs to the NAD synthetase family.

It carries out the reaction deamido-NAD(+) + L-glutamine + ATP + H2O = L-glutamate + AMP + diphosphate + NAD(+) + H(+). It functions in the pathway cofactor biosynthesis; NAD(+) biosynthesis; NAD(+) from deamido-NAD(+) (L-Gln route): step 1/1. Its function is as follows. Catalyzes the ATP-dependent amidation of deamido-NAD to form NAD. Uses L-glutamine as a nitrogen source. In vitro, can also use ammonia as donor with comparable specific activity, but cannot use nicotinate mononucleotide (NaMN) as substrate. The sequence is that of Glutamine-dependent NAD(+) synthetase from Acinetobacter baylyi (strain ATCC 33305 / BD413 / ADP1).